The sequence spans 634 residues: Coilin (634 aa).

Disordered regions lie at residues 87 to 135, 149 to 276, and 342 to 361; these read VSPA…IAEN, PGPS…KLSQ, and GAKS…DSTL. The span at 152–181 shows a compositional bias: polar residues; that stretch reads SVQSKLLTNKGTPKAPETQTEVSNMSANIE. Composition is skewed to basic and acidic residues over residues 223–234 and 251–272; these read TLKEGKMSESKN and KENE…KIPD.

This sequence belongs to the coilin family. In terms of tissue distribution, in egg chambers expressed in the follicle cells, nurse cells and oocyte. Expressed in the larval brain, salivary glands, fat bodies and in the somatic hub cells at the tip of the testis. Expressed in the spermatogonia and spermatocytes, and in the adult ejaculatory duct (at protein level). Expressed in the adult Malpighian tubules.

Its subcellular location is the nucleus. It localises to the nucleoplasm. It is found in the cajal body. The protein resides in the chromosome. The protein localises to the centromere. Its subcellular location is the cytoplasm. It localises to the cytoskeleton. It is found in the spindle. Functionally, component of nuclear coiled bodies, also known as Cajal bodies or CBs, which are involved in the modification and assembly of nucleoplasmic snRNPs. Required for Cajal body formation. The sequence is that of Coilin from Drosophila melanogaster (Fruit fly).